A 200-amino-acid polypeptide reads, in one-letter code: Recombination protein RecR (200 aa).

Residues 58-73 (CSICGNITEDDPCPIC) form a C4-type zinc finger. The Toprim domain maps to 81–177 (SQILVVEQSQ…KVTRLAHGLS (97 aa)).

It belongs to the RecR family.

Its function is as follows. May play a role in DNA repair. It seems to be involved in an RecBC-independent recombinational process of DNA repair. It may act with RecF and RecO. This is Recombination protein RecR from Limosilactobacillus reuteri (strain DSM 20016) (Lactobacillus reuteri).